The following is a 168-amino-acid chain: GPI-anchored protein LLG1 (168 aa).

The first 23 residues, 1 to 23, serve as a signal peptide directing secretion; the sequence is MELLSRALFFFLLLSVLSSFSSS. N-linked (GlcNAc...) asparagine glycosylation occurs at Asn-57. Asn-144 is lipidated: GPI-anchor amidated asparagine. The propeptide at 145-168 is removed in mature form; that stretch reads AATTSSSRLWLTVSAALLVFVKLF.

Interacts with FER. Expressed in pollen, pollen tubes, sporophytic pistil tissues, in the early stages of female gametophyte development, and in unfertilized, mature ovules. Expressed in roots, lateral roots, shoots, cotyledons, petioles, developing leaves and anther filaments.

It is found in the cell membrane. Functionally, component of the FER-regulated Rho GTPase signaling complex. Acts as a chaperone and coreceptor for FER. Required for localization of FER to the plasma membrane. The protein is GPI-anchored protein LLG1 of Arabidopsis thaliana (Mouse-ear cress).